The sequence spans 226 residues: 7-cyano-7-deazaguanine synthase (226 aa).

7-17 (ISGGMDSLVTT) lines the ATP pocket. Cys-187, Cys-195, Cys-198, and Cys-201 together coordinate Zn(2+).

The protein belongs to the QueC family. Zn(2+) is required as a cofactor.

It catalyses the reaction 7-carboxy-7-deazaguanine + NH4(+) + ATP = 7-cyano-7-deazaguanine + ADP + phosphate + H2O + H(+). Its pathway is purine metabolism; 7-cyano-7-deazaguanine biosynthesis. In terms of biological role, catalyzes the ATP-dependent conversion of 7-carboxy-7-deazaguanine (CDG) to 7-cyano-7-deazaguanine (preQ(0)). The sequence is that of 7-cyano-7-deazaguanine synthase from Chlorobium limicola (strain DSM 245 / NBRC 103803 / 6330).